A 192-amino-acid chain; its full sequence is Lumican (192 aa).

LRR repeat units lie at residues 1–23 (LQWL…VFSK), 26–46 (QLKK…PLPK), 47–68 (SLED…DGLL), 69–90 (NLTF…AAFK), 94–114 (SLEY…GLPA), 115–136 (SLLT…YFKR), 139–162 (GLQY…SFNI), 164–185 (SLVE…NENL), and 186–192 (ENYYLEV).

The protein belongs to the small leucine-rich proteoglycan (SLRP) family. SLRP class II subfamily. In terms of assembly, binds to laminin. In terms of processing, sulfated on tyrosine residue(s). Contains keratan sulfate.

It is found in the secreted. The protein resides in the extracellular space. Its subcellular location is the extracellular matrix. The chain is Lumican (LUM) from Oryctolagus cuniculus (Rabbit).